The chain runs to 329 residues: Biotin synthase (329 aa).

Residues 38–262 (NTIQVSTLLS…IMPHSYIRLS (225 aa)) enclose the Radical SAM core domain. Positions 53, 57, and 60 each coordinate [4Fe-4S] cluster. Residues cysteine 97, cysteine 128, cysteine 188, and arginine 260 each contribute to the [2Fe-2S] cluster site.

The protein belongs to the radical SAM superfamily. Biotin synthase family. As to quaternary structure, homodimer. [4Fe-4S] cluster serves as cofactor. It depends on [2Fe-2S] cluster as a cofactor.

The enzyme catalyses (4R,5S)-dethiobiotin + (sulfur carrier)-SH + 2 reduced [2Fe-2S]-[ferredoxin] + 2 S-adenosyl-L-methionine = (sulfur carrier)-H + biotin + 2 5'-deoxyadenosine + 2 L-methionine + 2 oxidized [2Fe-2S]-[ferredoxin]. It participates in cofactor biosynthesis; biotin biosynthesis; biotin from 7,8-diaminononanoate: step 2/2. Functionally, catalyzes the conversion of dethiobiotin (DTB) to biotin by the insertion of a sulfur atom into dethiobiotin via a radical-based mechanism. The protein is Biotin synthase of Acinetobacter calcoaceticus.